A 261-amino-acid chain; its full sequence is UPF0246 protein Rmet_0978 (261 aa).

It belongs to the UPF0246 family.

The sequence is that of UPF0246 protein Rmet_0978 from Cupriavidus metallidurans (strain ATCC 43123 / DSM 2839 / NBRC 102507 / CH34) (Ralstonia metallidurans).